An 858-amino-acid chain; its full sequence is Piwi-like protein 1 (858 aa).

A compositionally biased stretch (basic residues) spans 1–13 (MTGRARARSRGRG). A disordered region spans residues 1–56 (MTGRARARSRGRGRGQEPAAPGAQPPVSQEAAKPVVSTPSEGQLVGRGRQKPAPGA). Low complexity predominate over residues 16 to 26 (QEPAAPGAQPP). One can recognise a PAZ domain in the interval 276-388 (TVLDFMYSLR…LVPEFCYLTG (113 aa)). The interval 314-316 (TYR) is required for binding 2'-O-methylated 3'-end of piRNAs. An MID region region spans residues 476–612 (SKEMRGLPLI…LQMNCKMGGE (137 aa)). The Piwi domain occupies 552–844 (MVVVILPTNR…LAFLVGQSIH (293 aa)). Residues D629, E667, D699, and H833 contribute to the active site.

It belongs to the argonaute family. Piwi subfamily. It depends on Mg(2+) as a cofactor. In terms of processing, methylated on arginine residues; required for the interaction with Tudor domain-containing protein and subsequent localization to the meiotic nuage, also named P granule. In terms of tissue distribution, expressed exclusively in the adult gonads; expression in the ovary weaker than in the testis (at protein level). During neurogenesis and organogenesis, expression is detected in CNS (midbrain and eye) and fin buds. Starting from 24 hours post-fertilization, expression is found in the genital ridge.

It is found in the cytoplasm. Plays a central role during gametogenesis by repressing transposable elements and preventing their mobilization, which is essential for the germline integrity. Acts via the piRNA metabolic process, which mediates the repression of transposable elements during meiosis by forming complexes composed of piRNAs and Piwi proteins and governs the methylation and subsequent repression of transposons. Directly binds methylated piRNAs, a class of 24 to 30 nucleotide RNAs that are generated by a Dicer-independent mechanism and are primarily derived from transposons and other repeated sequence elements. Has a strong preference for piRNAs with a uridine nucleotide at their 5'-end (g1U preference, also named 1U-bias) and binds piRNAs in an opposite direction compared to piwil2/zili. Participates in a piRNA amplification loop with piwil2/zili. Not involved in the piRNA amplification loop, also named ping-pong amplification cycle. Acts as an endoribonuclease that cleaves transposon messenger RNAs. This chain is Piwi-like protein 1 (piwil1), found in Danio rerio (Zebrafish).